Here is a 257-residue protein sequence, read N- to C-terminus: L-aspartate dehydrogenase (257 aa).

NAD(+) contacts are provided by Ala-124 and Asn-180. His-208 is a catalytic residue.

The protein belongs to the L-aspartate dehydrogenase family.

It catalyses the reaction L-aspartate + NADP(+) + H2O = oxaloacetate + NH4(+) + NADPH + H(+). It carries out the reaction L-aspartate + NAD(+) + H2O = oxaloacetate + NH4(+) + NADH + H(+). The protein operates within cofactor biosynthesis; NAD(+) biosynthesis; iminoaspartate from L-aspartate (dehydrogenase route): step 1/1. In terms of biological role, specifically catalyzes the NAD or NADP-dependent dehydrogenation of L-aspartate to iminoaspartate. The polypeptide is L-aspartate dehydrogenase (Methanothermobacter thermautotrophicus (strain ATCC 29096 / DSM 1053 / JCM 10044 / NBRC 100330 / Delta H) (Methanobacterium thermoautotrophicum)).